Here is a 302-residue protein sequence, read N- to C-terminus: MCSDKNITATALVRPSWLRVKAPFSDEYQSTNELIKSLKLNTVCKEAACPNIGECWSKKHATVMILGSICTRACAFCNVSTGKPEQVDEYEPYRLSEAVMKLGLKHVVITSVDRDDISDGGASHFAKCITYIRERSPSTSIEVLTPDFLRKHDAWKIVAKARPDVYNHNIETVPSLYLKVRPGARYYNSLNLLHQVKIFDSSIFTKSGIMVGLGETKHEVLQVMDDLRAAEVDFLTIGQYLRPSARHIDVDRYVAPDEFDYYARVAKSKGFLMVSASPLTRSSYHAGEHFEKLKQMRLQNII.

Cysteine 44, cysteine 49, cysteine 55, cysteine 70, cysteine 74, cysteine 77, and serine 283 together coordinate [4Fe-4S] cluster. A Radical SAM core domain is found at 56-272 (WSKKHATVMI…ARVAKSKGFL (217 aa)).

Belongs to the radical SAM superfamily. Lipoyl synthase family. It depends on [4Fe-4S] cluster as a cofactor.

The protein resides in the cytoplasm. The catalysed reaction is [[Fe-S] cluster scaffold protein carrying a second [4Fe-4S](2+) cluster] + N(6)-octanoyl-L-lysyl-[protein] + 2 oxidized [2Fe-2S]-[ferredoxin] + 2 S-adenosyl-L-methionine + 4 H(+) = [[Fe-S] cluster scaffold protein] + N(6)-[(R)-dihydrolipoyl]-L-lysyl-[protein] + 4 Fe(3+) + 2 hydrogen sulfide + 2 5'-deoxyadenosine + 2 L-methionine + 2 reduced [2Fe-2S]-[ferredoxin]. It participates in protein modification; protein lipoylation via endogenous pathway; protein N(6)-(lipoyl)lysine from octanoyl-[acyl-carrier-protein]: step 2/2. Its function is as follows. Catalyzes the radical-mediated insertion of two sulfur atoms into the C-6 and C-8 positions of the octanoyl moiety bound to the lipoyl domains of lipoate-dependent enzymes, thereby converting the octanoylated domains into lipoylated derivatives. This Orientia tsutsugamushi (strain Ikeda) (Rickettsia tsutsugamushi) protein is Lipoyl synthase.